A 185-amino-acid polypeptide reads, in one-letter code: Large ribosomal subunit protein uL5 (185 aa).

The protein belongs to the universal ribosomal protein uL5 family. Part of the 50S ribosomal subunit; part of the 5S rRNA/L5/L18/L25 subcomplex. Contacts the 5S rRNA and the P site tRNA. Forms a bridge to the 30S subunit in the 70S ribosome.

Its function is as follows. This is one of the proteins that bind and probably mediate the attachment of the 5S RNA into the large ribosomal subunit, where it forms part of the central protuberance. In the 70S ribosome it contacts protein S13 of the 30S subunit (bridge B1b), connecting the 2 subunits; this bridge is implicated in subunit movement. Contacts the P site tRNA; the 5S rRNA and some of its associated proteins might help stabilize positioning of ribosome-bound tRNAs. The sequence is that of Large ribosomal subunit protein uL5 from Bartonella bacilliformis (strain ATCC 35685 / KC583 / Herrer 020/F12,63).